The chain runs to 298 residues: Protein pxr1 (298 aa).

The segment covering 1-11 (MGLAAPRKRTK) has biased composition (basic residues). Positions 1 to 23 (MGLAAPRKRTKISHDPNNTNWAR) are disordered. The G-patch domain occupies 25–79 (TSGFGHKILSSQGWTPGSFLGARDAAHADMFTAASAGHIRVVVKDDTLGLGARAG). Residues 145–274 (LPERESVQQS…RPLGRQIVRG (130 aa)) form a disordered region. Over residues 151–164 (VQQSRAAVETSDSN) the composition is skewed to polar residues. The span at 199–222 (REKKEKKDKKEKKEKKDKKDKKRK) shows a compositional bias: basic residues. The segment covering 247 to 256 (GLESDSTSVS) has biased composition (polar residues).

This sequence belongs to the PINX1 family.

The protein resides in the nucleus. It localises to the nucleolus. In terms of biological role, involved in rRNA-processing at A0, A1 and A2 sites and negatively regulates telomerase. This chain is Protein pxr1 (pxr1), found in Aspergillus terreus (strain NIH 2624 / FGSC A1156).